The following is a 608-amino-acid chain: Glutamine--fructose-6-phosphate aminotransferase [isomerizing] (608 aa).

Catalysis depends on Cys-2, which acts as the Nucleophile; for GATase activity. One can recognise a Glutamine amidotransferase type-2 domain in the interval 2-218 (CGICGIVGHQ…DGDWCELTPD (217 aa)). SIS domains follow at residues 284–423 (MPFD…ARGT) and 456–598 (MAAV…VDQP). The active-site For Fru-6P isomerization activity is Lys-603.

Homodimer.

It is found in the cytoplasm. The enzyme catalyses D-fructose 6-phosphate + L-glutamine = D-glucosamine 6-phosphate + L-glutamate. In terms of biological role, catalyzes the first step in hexosamine metabolism, converting fructose-6P into glucosamine-6P using glutamine as a nitrogen source. This chain is Glutamine--fructose-6-phosphate aminotransferase [isomerizing], found in Gluconobacter oxydans (strain 621H) (Gluconobacter suboxydans).